The following is a 567-amino-acid chain: Interferon lambda receptor 1 (567 aa).

Residues 1-22 form the signal peptide; that stretch reads MSAWRIRVLATLCFLWQPRVHG. The Extracellular portion of the chain corresponds to 23–229; the sequence is QLPPPQNVTL…YEGEWKFPFS (207 aa). The Fibronectin type-III domain maps to 26-121; that stretch reads PPQNVTLLSK…KSQFKEYHLD (96 aa). An N-linked (GlcNAc...) asparagine glycan is attached at N29. 3 disulfides stabilise this stretch: C74–C82, C86–C149, and C193–C215. N141 is a glycosylation site (N-linked (GlcNAc...) asparagine). The helical transmembrane segment at 230–250 threads the bilayer; it reads ATIPVFVLLILLTSASIIWLL. The Cytoplasmic portion of the chain corresponds to 251–567; that stretch reads KQDAKHKKMP…YQHSHYMRRS (317 aa).

The protein belongs to the type II cytokine receptor family. As to quaternary structure, heterodimer with IL10RB.

The protein localises to the membrane. In terms of biological role, the IFNLR1/IL10RB dimer is a receptor for the cytokine ligands IFNL2 and IFNL3 and mediates their antiviral activity. The ligand/receptor complex stimulate the activation of the JAK/STAT signaling pathway leading to the expression of IFN-stimulated genes (ISG), which contribute to the antiviral state. Determines the cell type specificity of the lambda interferon action. Shows a more restricted pattern of expression in the epithelial tissues thereby limiting responses to lambda interferons primarily to epithelial cells of the respiratory, gastrointestinal, and reproductive tracts. In Gallus gallus (Chicken), this protein is Interferon lambda receptor 1 (IFNLR1).